Reading from the N-terminus, the 321-residue chain is uncharacterized protein (321 aa).

Transmembrane regions (helical) follow at residues 12–32 (IGVEFIIFSVYAVFSISWAAT), 52–72 (LITSMIVVAKIFGASFTAFLV), 86–106 (ILMSSGIFLSFVDSYSGILII), 109–129 (LTGLGSACALVCLVPIAQQWF), 136–156 (FVISFNITSNLVGITLGLVLA), 168–188 (DSLSFYAWINLILLILWLFVG), 214–234 (WGMIIFYIGPILFLNSLFTFL), 254–274 (KEIPALANFAIIFGPYLGLFF), and 292–312 (IFICGFCMLFLQNLVLIQIFA).

It is found in the cell membrane. This is an uncharacterized protein from Campylobacter jejuni subsp. jejuni serotype O:2 (strain ATCC 700819 / NCTC 11168).